Reading from the N-terminus, the 180-residue chain is Adenine phosphoribosyltransferase (180 aa).

It belongs to the purine/pyrimidine phosphoribosyltransferase family. Homodimer.

The protein localises to the cytoplasm. It catalyses the reaction AMP + diphosphate = 5-phospho-alpha-D-ribose 1-diphosphate + adenine. It participates in purine metabolism; AMP biosynthesis via salvage pathway; AMP from adenine: step 1/1. Catalyzes a salvage reaction resulting in the formation of AMP, that is energically less costly than de novo synthesis. The protein is Adenine phosphoribosyltransferase of Mycolicibacterium paratuberculosis (strain ATCC BAA-968 / K-10) (Mycobacterium paratuberculosis).